The sequence spans 532 residues: SET and MYND domain-containing protein DDB_G0288495 (532 aa).

In terms of domain architecture, SET spans 25–448 (PWIEVKSVSE…ENQELLITYI (424 aa)). An MYND-type; degenerate zinc finger spans residues 70 to 116 (CTTCFKILLESNRHNFQTCPSCFQVNYCSNYCKQYSKIETKHTELEC). The stretch at 199–240 (INSKNNNEFENEEEEEEEQEQKGEGEQEENENNENNEKVKKK) forms a coiled coil. A disordered region spans residues 204 to 234 (NNEFENEEEEEEEQEQKGEGEQEENENNENN). Over residues 207 to 217 (FENEEEEEEEQ) the composition is skewed to acidic residues.

This sequence belongs to the class V-like SAM-binding methyltransferase superfamily.

Probable methyltransferase. The sequence is that of SET and MYND domain-containing protein DDB_G0288495 from Dictyostelium discoideum (Social amoeba).